Consider the following 417-residue polypeptide: Proteasome-activating nucleotidase (417 aa).

Positions 24–78 form a coiled coil; sequence SKYLLDRVKQLEERNVRLKEEYRKIELEKKSVENKKVQYEREIRKLTSELDRLKT. ATP-binding positions include 203–208 and H342; that span reads GTGKTL. Residues 415-417 form a docks into pockets in the proteasome alpha-ring to cause gate opening region; sequence MFA.

Belongs to the AAA ATPase family. In terms of assembly, homohexamer. The hexameric complex has a two-ring architecture resembling a top hat that caps the 20S proteasome core at one or both ends. Upon ATP-binding, the C-terminus of PAN interacts with the alpha-rings of the proteasome core by binding to the intersubunit pockets.

It localises to the cytoplasm. ATPase which is responsible for recognizing, binding, unfolding and translocation of substrate proteins into the archaeal 20S proteasome core particle. Is essential for opening the gate of the 20S proteasome via an interaction with its C-terminus, thereby allowing substrate entry and access to the site of proteolysis. Thus, the C-termini of the proteasomal ATPase function like a 'key in a lock' to induce gate opening and therefore regulate proteolysis. Unfolding activity requires energy from ATP hydrolysis, whereas ATP binding alone promotes ATPase-20S proteasome association which triggers gate opening, and supports translocation of unfolded substrates. In Methanocella arvoryzae (strain DSM 22066 / NBRC 105507 / MRE50), this protein is Proteasome-activating nucleotidase.